Reading from the N-terminus, the 587-residue chain is Glucosylglycerate phosphorylase (587 aa).

The active-site Nucleophile is the aspartate 236.

Belongs to the glycosyl hydrolase 13 family. Glucosylglycerate phosphorylase subfamily.

The catalysed reaction is (2R)-2-O-(alpha-D-glucopyranosyl)-glycerate + phosphate = (R)-glycerate + alpha-D-glucose 1-phosphate. Catalyzes the reversible phosphorolysis of glucosylglycerate into alpha-D-glucose 1-phosphate (Glc1P) and D-glycerate. May be a regulator of intracellular levels of glucosylglycerate, a compatible solute that primarily protects organisms facing salt stress and very specific nutritional constraints. Cannot catalyze the phosphorolysis of sucrose. The protein is Glucosylglycerate phosphorylase of Spirochaeta thermophila (strain ATCC 700085 / DSM 6578 / Z-1203).